Here is a 474-residue protein sequence, read N- to C-terminus: MRSHQAGRKLPLLQLLGCVAVFSVFVFTIQSSFFADNNRKLDLQPEDIQILSDFQSSVQQCVANRGLGLSAHIIDHCNLILKFPEGTNSTWYNAQFKVFEALEFKYNVCEAVLLWEQYRNMTTVLTREYLDVRPDGWLDYAAMRIAQLGADKCYNRTLCEEHLNVILPAKPPFHPRQFHKCAVVGNSGDLLKTEFGEEIDSHDAVFRDNEAPVNEKYAKYVGVKRDFRLVVRGAARNMIKILNGSDNEVLIIKSVTHRDFNEMIKRIPNPVYLFQGIVLRRGAKGTGMKSIELALSMCDIVDIYGFTVDPGYTEWTRYFSTPRKGHNPLQGRAYYQLLECLGVIRIHSPMRSERKEDWSSVPSREMISRAHTAALRLQRSQQPTSSKRDGSGQFGNCKVWGDADPTKGPVSGSPDMSETRKKSNYKKWEVMPFRSLRKEARDHYIQMKGVSQYKMDGNKLDDLVCVRHPLKLDT.

The Cytoplasmic segment spans residues 1 to 14 (MRSHQAGRKLPLLQ). The helical; Signal-anchor for type II membrane protein transmembrane segment at 15 to 35 (LLGCVAVFSVFVFTIQSSFFA) threads the bilayer. Over 36-474 (DNNRKLDLQP…CVRHPLKLDT (439 aa)) the chain is Lumenal. 4 N-linked (GlcNAc...) asparagine glycosylation sites follow: Asn88, Asn120, Asn155, and Asn243. A disordered region spans residues 376–421 (RLQRSQQPTSSKRDGSGQFGNCKVWGDADPTKGPVSGSPDMSETRK).

It belongs to the glycosyltransferase 29 family. In terms of tissue distribution, highly expressed in inflorescences and siliques and at lower levels in roots, leaves and stems.

It is found in the golgi apparatus membrane. In terms of biological role, required for normal pollen grain germination and pollen tube growth. May not be required for pollen development and female gametophytic function. The protein is Sialyltransferase-like protein 1 of Arabidopsis thaliana (Mouse-ear cress).